The following is a 662-amino-acid chain: LIM domain kinase 1 (662 aa).

LIM zinc-binding domains follow at residues 24–83 and 84–145; these read PVCA…RFGE and LCHG…MVVT. The region spanning 166 to 259 is the PDZ domain; that stretch reads LVSIPACSDG…LLQLTIEHDP (94 aa). A disordered region spans residues 262-328; the sequence is PLPRDLALPC…ASQRKDIGRS (67 aa). The span at 272 to 287 shows a compositional bias: pro residues; the sequence is SPLPDPHSPLRSPVPA. Low complexity predominate over residues 309–320; the sequence is SPGSSSVGSPAS. In terms of domain architecture, Protein kinase spans 346 to 611; the sequence is LIHGEVLGKG…PSFSKLEQWL (266 aa). ATP contacts are provided by residues 352–360 and lysine 375; that span reads LGKGCFGQA. Aspartate 467 is a catalytic residue.

It belongs to the protein kinase superfamily. TKL Ser/Thr protein kinase family. Expressed predominantly in the brain.

The protein localises to the cytoplasm. Its subcellular location is the nucleus. It is found in the cytoskeleton. The protein resides in the cell projection. It localises to the growth cone. It carries out the reaction L-seryl-[protein] + ATP = O-phospho-L-seryl-[protein] + ADP + H(+). It catalyses the reaction L-threonyl-[protein] + ATP = O-phospho-L-threonyl-[protein] + ADP + H(+). In terms of biological role, protein kinase which regulates actin filament dynamics. Phosphorylates and inactivates the actin binding/depolymerizing factor cofilin, thereby stabilizing the actin cytoskeleton. Required for motility of the axon growth cone. The sequence is that of LIM domain kinase 1 (LIMK1) from Gallus gallus (Chicken).